The following is a 231-amino-acid chain: ATP phosphoribosyltransferase (231 aa).

It belongs to the ATP phosphoribosyltransferase family. Short subfamily. As to quaternary structure, heteromultimer composed of HisG and HisZ subunits.

Its subcellular location is the cytoplasm. It catalyses the reaction 1-(5-phospho-beta-D-ribosyl)-ATP + diphosphate = 5-phospho-alpha-D-ribose 1-diphosphate + ATP. It participates in amino-acid biosynthesis; L-histidine biosynthesis; L-histidine from 5-phospho-alpha-D-ribose 1-diphosphate: step 1/9. Catalyzes the condensation of ATP and 5-phosphoribose 1-diphosphate to form N'-(5'-phosphoribosyl)-ATP (PR-ATP). Has a crucial role in the pathway because the rate of histidine biosynthesis seems to be controlled primarily by regulation of HisG enzymatic activity. The sequence is that of ATP phosphoribosyltransferase from Brucella ovis (strain ATCC 25840 / 63/290 / NCTC 10512).